The chain runs to 41 residues: Giant hemoglobin AI chain (41 aa).

One can recognise a Globin domain in the interval Asp-2–Pro-41.

This sequence belongs to the globin family. Giant hemoglobin is composed of four heme-containing chains (AI to AIV), and two linker chains (AV and AVI).

The polypeptide is Giant hemoglobin AI chain (Lamellibrachia sp. (Deep-sea giant tube worm)).